Here is a 308-residue protein sequence, read N- to C-terminus: Nuclear transcription factor Y subunit A-5 (308 aa).

Residues Met1 to Ser10 are compositionally biased toward basic and acidic residues. 2 disordered regions span residues Met1–Ser26 and Gly49–Glu71. The span at Ser11–Ser26 shows a compositional bias: polar residues. A Subunit association domain (SAD) motif is present at residues Phe181 to Asn204. The NFYA/HAP2-type DNA-binding region spans Lys211–Thr236. Residues Met251–Ile273 form a disordered region.

Belongs to the NFYA/HAP2 subunit family. As to quaternary structure, heterotrimeric transcription factor composed of three components, NF-YA, NF-YB and NF-YC. NF-YB and NF-YC must interact and dimerize for NF-YA association and DNA binding. As to expression, expressed in the whole plant, except roots. Present in etiolated seedlings.

Its subcellular location is the nucleus. Functionally, stimulates the transcription of various genes by recognizing and binding to a CCAAT motif in promoters. Involved in the blue light (BL) and abscisic acid (ABA) signaling pathways. In Arabidopsis thaliana (Mouse-ear cress), this protein is Nuclear transcription factor Y subunit A-5 (NFYA5).